The following is an 80-amino-acid chain: uncharacterized protein (80 aa).

This is an uncharacterized protein from Acidianus filamentous virus 1 (isolate United States/Yellowstone) (AFV-1).